The primary structure comprises 116 residues: PTS system cellobiose-specific EIIA component (116 aa).

One can recognise a PTS EIIA type-3 domain in the interval 11 to 109 (DDYMGVVMGI…AVEVVGQEQR (99 aa)). Catalysis depends on His-85, which acts as the Tele-phosphohistidine intermediate. His-85 carries the phosphohistidine; by HPr modification. Asp-88 lines the Mg(2+) pocket.

As to quaternary structure, homotrimer. Requires Mg(2+) as cofactor.

Its function is as follows. The phosphoenolpyruvate-dependent sugar phosphotransferase system (sugar PTS), a major carbohydrate active transport system, catalyzes the phosphorylation of incoming sugar substrates concomitantly with their translocation across the cell membrane. Involved in cellobiose transport with PtcB and CelB. This system can also transport lactose. The chain is PTS system cellobiose-specific EIIA component from Lactococcus lactis subsp. lactis (strain IL1403) (Streptococcus lactis).